The chain runs to 313 residues: MAPYPYKVQTTVPELQYENFDGAKFGYMFWPVQNGTNEVRGRVLLIHGFGEYTKIQFRLMDHLSLNGYESFTFDQRGAGVTSPGRSKGVTDEYHVFNDLEHFVEKNLSECKAKGIPLFMWGHSMGGGICLNYACQGKHKNEISGYIGSGPLIILHPHTMYNKPTQIIAPLLAKFLPRVRIDTGLDLKGITSDKAYRAFLGSDPMSVPLYGSFRQIHDFMQRGAKLYKNENNYIQKNFAKDKPVIIMHGQDDTINDPKGSEKFIQDCPSADKELKLYPGARHSIFSLETDKVFNTVFNDMKQWLDKHTTTEAKP.

Positions 121 to 125 (GHSMG) match the GXSXG motif. Ser-123 acts as the Nucleophile in catalysis. Residues Asp-251 and His-281 each act as charge relay system in the active site.

Belongs to the AB hydrolase superfamily. Monoacylglycerol lipase family.

The protein resides in the lipid droplet. Its subcellular location is the cytoplasm. The protein localises to the endoplasmic reticulum. It localises to the mitochondrion outer membrane. The enzyme catalyses Hydrolyzes glycerol monoesters of long-chain fatty acids.. The catalysed reaction is a fatty acid ethyl ester + H2O = ethanol + a fatty acid + H(+). It carries out the reaction 1-(9Z-octadecenoyl)-glycerol + H2O = glycerol + (9Z)-octadecenoate + H(+). It catalyses the reaction 2-(9Z-octadecenoyl)-glycerol + H2O = glycerol + (9Z)-octadecenoate + H(+). The enzyme catalyses 1-hexadecanoylglycerol + H2O = glycerol + hexadecanoate + H(+). The catalysed reaction is 2-hexadecanoylglycerol + H2O = glycerol + hexadecanoate + H(+). It carries out the reaction ethyl hexadecanoate + H2O = ethanol + hexadecanoate + H(+). It catalyses the reaction ethyl (9Z)-octadecenoate + H2O = ethanol + (9Z)-octadecenoate + H(+). The enzyme catalyses ethyl (9Z)-hexadecenoate + H2O = (9Z)-hexadecenoate + ethanol + H(+). The catalysed reaction is ethyl octadecanoate + H2O = ethanol + octadecanoate + H(+). Its pathway is glycerolipid metabolism; triacylglycerol degradation. Its function is as follows. Converts monoacylglycerides (MAG) to free fatty acids and glycerol. Has a strong preference for monounsaturated monoglycerides. Required for efficient degradation of MAG, short-lived intermediates of glycerolipid metabolism which may also function as lipid signaling molecules. Controls inactivation of the signaling lipid N-palmitoylethanolamine (PEA). Involved in fatty acid ethyl ester (FAEE) catabolism. FAEEs are non-oxidative metabolites of ethanol that are transiently incorporated into lipid droplets (LDs). Their mobilization by LD-resident FAEE hydrolases facilitates a controlled metabolism of these potentially toxic lipid metabolites. This chain is Monoglyceride lipase (YJU3), found in Saccharomyces cerevisiae (strain ATCC 204508 / S288c) (Baker's yeast).